A 122-amino-acid polypeptide reads, in one-letter code: UPF0231 protein VIBHAR_03438 (122 aa).

Belongs to the UPF0231 family.

The protein is UPF0231 protein VIBHAR_03438 of Vibrio campbellii (strain ATCC BAA-1116).